Reading from the N-terminus, the 216-residue chain is Adenylate kinase (216 aa).

10 to 15 (GAGKGT) provides a ligand contact to ATP. The tract at residues 30-59 (STGDMFRAAMKAETELGLQAKSFIDKGALV) is NMP. AMP-binding positions include T31, R36, 57–59 (ALV), 85–88 (GFPR), and Q92. The interval 126–163 (GRRICKECGATYHLEFNPPAKADVCDKCGGELYQRSDD) is LID. R127 is an ATP binding site. Zn(2+) contacts are provided by C130 and C133. 136–137 (TY) contributes to the ATP binding site. 2 residues coordinate Zn(2+): C150 and C153. AMP is bound by residues R160 and R171. Residue Q199 coordinates ATP.

The protein belongs to the adenylate kinase family. Monomer.

It localises to the cytoplasm. The enzyme catalyses AMP + ATP = 2 ADP. The protein operates within purine metabolism; AMP biosynthesis via salvage pathway; AMP from ADP: step 1/1. In terms of biological role, catalyzes the reversible transfer of the terminal phosphate group between ATP and AMP. Plays an important role in cellular energy homeostasis and in adenine nucleotide metabolism. The sequence is that of Adenylate kinase from Bacillus mycoides (strain KBAB4) (Bacillus weihenstephanensis).